The following is a 250-amino-acid chain: Ubiquinone/menaquinone biosynthesis C-methyltransferase UbiE (250 aa).

S-adenosyl-L-methionine is bound by residues T73, D94, and 122–123 (DA).

Belongs to the class I-like SAM-binding methyltransferase superfamily. MenG/UbiE family.

The catalysed reaction is a 2-demethylmenaquinol + S-adenosyl-L-methionine = a menaquinol + S-adenosyl-L-homocysteine + H(+). It carries out the reaction a 2-methoxy-6-(all-trans-polyprenyl)benzene-1,4-diol + S-adenosyl-L-methionine = a 5-methoxy-2-methyl-3-(all-trans-polyprenyl)benzene-1,4-diol + S-adenosyl-L-homocysteine + H(+). Its pathway is quinol/quinone metabolism; menaquinone biosynthesis; menaquinol from 1,4-dihydroxy-2-naphthoate: step 2/2. It functions in the pathway cofactor biosynthesis; ubiquinone biosynthesis. Its function is as follows. Methyltransferase required for the conversion of demethylmenaquinol (DMKH2) to menaquinol (MKH2) and the conversion of 2-polyprenyl-6-methoxy-1,4-benzoquinol (DDMQH2) to 2-polyprenyl-3-methyl-6-methoxy-1,4-benzoquinol (DMQH2). In Coxiella burnetii (strain RSA 493 / Nine Mile phase I), this protein is Ubiquinone/menaquinone biosynthesis C-methyltransferase UbiE.